Reading from the N-terminus, the 35-residue chain is Photosystem II reaction center protein T (35 aa).

The helical transmembrane segment at A3 to F23 threads the bilayer.

The protein belongs to the PsbT family. PSII is composed of 1 copy each of membrane proteins PsbA, PsbB, PsbC, PsbD, PsbE, PsbF, PsbH, PsbI, PsbJ, PsbK, PsbL, PsbM, PsbT, PsbY, PsbZ, Psb30/Ycf12, at least 3 peripheral proteins of the oxygen-evolving complex and a large number of cofactors. It forms dimeric complexes.

The protein resides in the plastid. It localises to the chloroplast thylakoid membrane. Functionally, found at the monomer-monomer interface of the photosystem II (PS II) dimer, plays a role in assembly and dimerization of PSII. PSII is a light-driven water plastoquinone oxidoreductase, using light energy to abstract electrons from H(2)O, generating a proton gradient subsequently used for ATP formation. The sequence is that of Photosystem II reaction center protein T from Asarum canadense (Wild ginger).